Consider the following 123-residue polypeptide: Small ribosomal subunit protein uS12cz/uS12cy (123 aa).

Belongs to the universal ribosomal protein uS12 family. In terms of assembly, part of the 30S ribosomal subunit.

It is found in the plastid. Its subcellular location is the chloroplast. With S4 and S5 plays an important role in translational accuracy. Located at the interface of the 30S and 50S subunits. In Eucalyptus globulus subsp. globulus (Tasmanian blue gum), this protein is Small ribosomal subunit protein uS12cz/uS12cy (rps12-A).